We begin with the raw amino-acid sequence, 741 residues long: Phosphoribosylformylglycinamidine synthase subunit PurL (741 aa).

Residue histidine 53 is part of the active site. Residues tyrosine 56 and lysine 95 each contribute to the ATP site. Glutamate 97 lines the Mg(2+) pocket. Residues 98-101 (SHNH) and arginine 120 each bind substrate. The Proton acceptor role is filled by histidine 99. Aspartate 121 is a Mg(2+) binding site. Glutamine 244 is a binding site for substrate. Mg(2+) is bound at residue aspartate 274. 318–320 (ESQ) contacts substrate. Positions 501 and 538 each coordinate ATP. Asparagine 539 contacts Mg(2+). Serine 541 contributes to the substrate binding site.

It belongs to the FGAMS family. Monomer. Part of the FGAM synthase complex composed of 1 PurL, 1 PurQ and 2 PurS subunits.

It localises to the cytoplasm. It carries out the reaction N(2)-formyl-N(1)-(5-phospho-beta-D-ribosyl)glycinamide + L-glutamine + ATP + H2O = 2-formamido-N(1)-(5-O-phospho-beta-D-ribosyl)acetamidine + L-glutamate + ADP + phosphate + H(+). The protein operates within purine metabolism; IMP biosynthesis via de novo pathway; 5-amino-1-(5-phospho-D-ribosyl)imidazole from N(2)-formyl-N(1)-(5-phospho-D-ribosyl)glycinamide: step 1/2. In terms of biological role, part of the phosphoribosylformylglycinamidine synthase complex involved in the purines biosynthetic pathway. Catalyzes the ATP-dependent conversion of formylglycinamide ribonucleotide (FGAR) and glutamine to yield formylglycinamidine ribonucleotide (FGAM) and glutamate. The FGAM synthase complex is composed of three subunits. PurQ produces an ammonia molecule by converting glutamine to glutamate. PurL transfers the ammonia molecule to FGAR to form FGAM in an ATP-dependent manner. PurS interacts with PurQ and PurL and is thought to assist in the transfer of the ammonia molecule from PurQ to PurL. The sequence is that of Phosphoribosylformylglycinamidine synthase subunit PurL from Ligilactobacillus salivarius (strain UCC118) (Lactobacillus salivarius).